We begin with the raw amino-acid sequence, 469 residues long: MSSRTLYDKVWNFHQVKELPGGSTQLFIGLHLIHEVTSPQAFSALNEKKLGVKFPNLTVATVDHIVPTSNQQRPFSDPLAEEMLATLEKNCKTHGIKFHGIGSNSQGVVHVMAPELGLTQPGMTVACGDSHTSTHGAFGAIAFGIGTSQVRDVLASQSLAMNKLKVRRIWVEGELQKGVYAKDLILHIIRHLGVKGGVGFAYEFAGPAIEKLSMEGRMTICNMAIEGGARCGYINPDETTFKYIKGKEHAPKGQEWDKAISWWKSLASDSKATFDDEIQLDGSSIEPTVTWGITPGQGISIKETIPNPEFLPKNEQQIAKDACKYMNLKPDEPIEGQSIDVCFIGSCTNGRLSDLEEASKIVKGNTVADGIRAFVVPGSQKVAKEAKEKGLDKIFLKAGFEWREPGCSMCLAMNPDKLEGRQISASSSNRNFKGRQGSANGRTLLMSPAMVAAAAINGKVTDVRKFLKE.

Residues cysteine 347, cysteine 407, and cysteine 410 each contribute to the [4Fe-4S] cluster site.

Belongs to the aconitase/IPM isomerase family. LeuC type 1 subfamily. In terms of assembly, heterodimer of LeuC and LeuD. Requires [4Fe-4S] cluster as cofactor.

It carries out the reaction (2R,3S)-3-isopropylmalate = (2S)-2-isopropylmalate. It participates in amino-acid biosynthesis; L-leucine biosynthesis; L-leucine from 3-methyl-2-oxobutanoate: step 2/4. Catalyzes the isomerization between 2-isopropylmalate and 3-isopropylmalate, via the formation of 2-isopropylmaleate. The polypeptide is 3-isopropylmalate dehydratase large subunit (Prochlorococcus marinus (strain NATL2A)).